A 133-amino-acid polypeptide reads, in one-letter code: ATP synthase epsilon chain, chloroplastic (133 aa).

It belongs to the ATPase epsilon chain family. In terms of assembly, F-type ATPases have 2 components, CF(1) - the catalytic core - and CF(0) - the membrane proton channel. CF(1) has five subunits: alpha(3), beta(3), gamma(1), delta(1), epsilon(1). CF(0) has three main subunits: a, b and c.

It localises to the plastid. Its subcellular location is the chloroplast thylakoid membrane. Functionally, produces ATP from ADP in the presence of a proton gradient across the membrane. This Vitis vinifera (Grape) protein is ATP synthase epsilon chain, chloroplastic.